The following is a 389-amino-acid chain: 26S proteasome regulatory subunit 6B homolog (389 aa).

Position 175–182 (175–182 (GPPGTGKT)) interacts with ATP.

This sequence belongs to the AAA ATPase family.

It is found in the cytoplasm. The protein localises to the nucleus. The 26S proteasome is involved in the ATP-dependent degradation of ubiquitinated proteins. The regulatory (or ATPase) complex confers ATP dependency and substrate specificity to the 26S complex. This chain is 26S proteasome regulatory subunit 6B homolog (rpt3), found in Schizosaccharomyces pombe (strain 972 / ATCC 24843) (Fission yeast).